The sequence spans 138 residues: Transcription factor Atoh7-b (138 aa).

The bHLH domain occupies 33–85 (KRRLAANARERRRMQGLNTAFDSLRKVVPQWGEDKKLSKYETLQMALSYIMAL).

Its subcellular location is the nucleus. It is found in the perikaryon. The protein localises to the cell projection. The protein resides in the axon. Functionally, transcription factor that binds to DNA at the consensus sequence 5'-CAG[GC]TG-3'. Positively regulates the determination of retinal ganglion cell fate and formation of the optic nerve and retino-hypothalamic tract. Required for retinal circadian rhythm photoentrainment. Plays a role in brainstem auditory signaling and binaural processing. Regulates the differentiation of olfactory receptor neurons. During retinal neurogenesis, activates the transcription of several genes such as brn3d, coe3, cbfa2t2, glis2, elrC and xgadd45-gamma. This is Transcription factor Atoh7-b from Xenopus laevis (African clawed frog).